Here is a 460-residue protein sequence, read N- to C-terminus: Keratin, type I cytoskeletal 27 (460 aa).

A head region spans residues 1 to 83 (MSVRFSSASR…GNEHGLLSGN (83 aa)). The interval 84–119 (EKVTMQNLNDRLASYLDNVRALEEANADLEQKIKGW) is coil 1A. In terms of domain architecture, IF rod spans 84-399 (EKVTMQNLND…RLIDGEDGSC (316 aa)). Residues 120–141 (YEKFGPGSCRGLDHDYSRYFTV) are linker 1. The coil 1B stretch occupies residues 142–233 (IDDLRNQIIS…KNHEEEMKAL (92 aa)). Positions 234–256 (QCAAGGNVNVEMNAAPGVDLTVL) are linker 12. A coil 2 region spans residues 257 to 395 (LNNMRAEYEA…ETYCRLIDGE (139 aa)). The tail stretch occupies residues 396–460 (DGSCAKSKGY…NVKSEQRVPS (65 aa)). The tract at residues 435–460 (LSSRVHSVEEKSTKVNNVKSEQRVPS) is disordered. Positions 448–460 (KVNNVKSEQRVPS) are enriched in polar residues.

Belongs to the intermediate filament family. As to quaternary structure, heterotetramer of two type I and two type II keratins. Interacts with KRT6A to form filaments.

Its subcellular location is the cytoplasm. Functionally, essential for the proper assembly of type I and type II keratin protein complexes and formation of keratin intermediate filaments in the inner root sheath (irs). The sequence is that of Keratin, type I cytoskeletal 27 from Bos taurus (Bovine).